A 393-amino-acid chain; its full sequence is MDTFLFTSESVNEGHPDKLCDQISDAVLDACLEQDPDSKVACETCTKTNLVMIFGEITTKANLDYEKIVRDTCRAVGFVSEDVGLDADNCKVLVNIEQQSPDIAQGVHGHLTKRPEEIGAGDQGHMFGYATDETPELMPLSHVLATKLGARLTEVRKNGTCPWLRPDGKTQVTVEYFNDHGAMVPIRVHTVLISTQHDETVTNDEIAADLKEHVIKPIVPEKFLDEKTIFHLNPSGRFVIGGPHGDAGLTGRKIIIDTYGGWGAHGGGAFSGKDPTKVDRSGAYIVRQAAKSIVASGLARRCIVQVSYAIGVPEPLSVFVDTYATGKIPDKEILKIVKESFDFRPGMIAINLDLKRGGNGRFLKTAAYGHFGRDDPDFTWEVVKPLKAEKAQE.

E9 provides a ligand contact to Mg(2+). H15 is an ATP binding site. E43 lines the K(+) pocket. 2 residues coordinate L-methionine: E56 and Q99. ATP is bound by residues D167–K169, S235–F238, D246, R252–K253, A269, K273, and K277. D246 provides a ligand contact to L-methionine. K277 provides a ligand contact to L-methionine.

The protein belongs to the AdoMet synthase family. As to quaternary structure, homotetramer. Requires Mn(2+) as cofactor. It depends on Mg(2+) as a cofactor. Co(2+) is required as a cofactor. K(+) serves as cofactor.

The protein localises to the cytoplasm. It carries out the reaction L-methionine + ATP + H2O = S-adenosyl-L-methionine + phosphate + diphosphate. It participates in amino-acid biosynthesis; S-adenosyl-L-methionine biosynthesis; S-adenosyl-L-methionine from L-methionine: step 1/1. In terms of biological role, catalyzes the formation of S-adenosylmethionine from methionine and ATP. The reaction comprises two steps that are both catalyzed by the same enzyme: formation of S-adenosylmethionine (AdoMet) and triphosphate, and subsequent hydrolysis of the triphosphate. This chain is S-adenosylmethionine synthase 4 (METK4), found in Vitis vinifera (Grape).